Reading from the N-terminus, the 485-residue chain is Kynureninase 1 (485 aa).

Pyridoxal 5'-phosphate is bound by residues Leu-155, Thr-156, 183–186, Asp-267, His-270, and Tyr-292; that span reads FPSD. N6-(pyridoxal phosphate)lysine is present on Lys-293. Residues Trp-330 and Asn-358 each coordinate pyridoxal 5'-phosphate.

It belongs to the kynureninase family. In terms of assembly, homodimer. Pyridoxal 5'-phosphate serves as cofactor.

It is found in the cytoplasm. It catalyses the reaction L-kynurenine + H2O = anthranilate + L-alanine + H(+). It carries out the reaction 3-hydroxy-L-kynurenine + H2O = 3-hydroxyanthranilate + L-alanine + H(+). It participates in amino-acid degradation; L-kynurenine degradation; L-alanine and anthranilate from L-kynurenine: step 1/1. Its pathway is cofactor biosynthesis; NAD(+) biosynthesis; quinolinate from L-kynurenine: step 2/3. In terms of biological role, catalyzes the cleavage of L-kynurenine (L-Kyn) and L-3-hydroxykynurenine (L-3OHKyn) into anthranilic acid (AA) and 3-hydroxyanthranilic acid (3-OHAA), respectively. In Neurospora crassa (strain ATCC 24698 / 74-OR23-1A / CBS 708.71 / DSM 1257 / FGSC 987), this protein is Kynureninase 1 (kyn-1).